A 680-amino-acid polypeptide reads, in one-letter code: Pescadillo homolog (680 aa).

Residues 310–330 are disordered; the sequence is LDQAKDEQTAETTEESSDTID. The 120-residue stretch at 351–470 folds into the BRCT domain; that stretch reads QAGSLFAPFT…KLVRPDLYSP (120 aa). Positions 472–680 are disordered; sequence ATLPPHLSPW…RRKLEKGAAK (209 aa). The stretch at 496–523 forms a coiled coil; that stretch reads AEQEEEGEAEMAEDSDEEMEEAADEKSK. A compositionally biased stretch (acidic residues) spans 497-518; it reads EQEEEGEAEMAEDSDEEMEEAA. Residues 519 to 529 are compositionally biased toward basic and acidic residues; that stretch reads DEKSKTASKDE. Acidic residues-rich tracts occupy residues 530-543 and 551-585; these read AESESEEDDDDESV and GTDDDESESESEEEDEDFGGFEDDEAASESEDEEE. Positions 586-596 are enriched in basic and acidic residues; the sequence is VARTQHQKELE. Positions 613 to 680 form a coiled coil; it reads ASKKKASQAK…RRKLEKGAAK (68 aa). Residues 616–628 show a composition bias toward basic residues; sequence KKASQAKKIAAKK. The segment covering 629–639 has biased composition (basic and acidic residues); the sequence is RKEEEEIERQK.

Belongs to the pescadillo family. Component of the NOP7 complex, composed of erb1, nop7 and ytm1. The complex is held together by erb1, which interacts with nop7 via its N-terminal domain and with ytm1 via a high-affinity interaction between the seven-bladed beta-propeller domains of the 2 proteins. The NOP7 complex associates with the 66S pre-ribosome.

The protein localises to the nucleus. It localises to the nucleolus. It is found in the nucleoplasm. In terms of biological role, component of the NOP7 complex, which is required for maturation of the 25S and 5.8S ribosomal RNAs and formation of the 60S ribosome. This is Pescadillo homolog (nop7) from Aspergillus clavatus (strain ATCC 1007 / CBS 513.65 / DSM 816 / NCTC 3887 / NRRL 1 / QM 1276 / 107).